We begin with the raw amino-acid sequence, 110 residues long: BET1-like protein (110 aa).

At 1-85 (MADPWNRGHG…MVRSGRDNRK (85 aa)) the chain is on the cytoplasmic side. The t-SNARE coiled-coil homology domain occupies 14–76 (DMLDAENKRM…TGSVKRFSTM (63 aa)). The chain crosses the membrane as a helical; Anchor for type IV membrane protein span at residues 86 to 106 (ILCYVSVGLVVAFFLLYYLVS). Residues 107–110 (RMQN) lie on the Lumenal side of the membrane.

Component of a SNARE complex consisting of stx5, ykt6, gosr2 and bet1l.

The protein resides in the golgi apparatus membrane. Vesicle SNARE required for targeting and fusion of retrograde transport vesicles with the Golgi complex. Required for the integrity of the Golgi complex. This chain is BET1-like protein (bet1l), found in Danio rerio (Zebrafish).